Consider the following 423-residue polypeptide: CinA-like protein (423 aa).

Belongs to the CinA family.

The polypeptide is CinA-like protein (Chlorobium phaeobacteroides (strain DSM 266 / SMG 266 / 2430)).